The chain runs to 607 residues: WD repeat-containing protein 1 (607 aa).

WD repeat units follow at residues 4–45, 48–87, 93–135, 138–176, 180–218, 224–263, 270–306, 311–351, 358–408, 432–474, 480–518, 523–561, and 566–604; these read ELKK…IRNI, PAIADIYTEHAHPVVVARYAPSGFYIASGDTSGKLRIWDT, LLKY…LWDT, SVGEISGNIKVINSVDIKQTRPYRLVTGSDDNCCAFFEG, KFKFTMADHSRFVNCVRFSPDGSRLASAGADGQIFLYDG, VGNLGGSKAHDGGIYAVSWSADSTQLLSASGDKTAKIWDV, TTFHLGTEVLDQQLGCLWQKDYLLSVSLSGYINYLDK, RPLR…YWDA, TFTG…KMDV, LKDK…LYSI, KDEGKSLPVKGAVTDLAYSHDGAFLAVTDANKVVTVFNV, SEQNVYYGHHAKAVSVAWSPDNEHFASSGMDMMVYVWTL, and ARIKIPDAHRLHHVSSLAWLDEHTLATVSHDACVKQWTV.

The protein belongs to the WD repeat AIP1 family.

The protein localises to the cell membrane. It localises to the cytoplasm. It is found in the cytoskeleton. Its subcellular location is the nucleus. In terms of biological role, induces disassembly of actin filaments in conjunction with ADF/cofilin family proteins. Doesn't sever actin filaments alone, but caps the barbed ends of filaments severed by cofilin, which blocks annealing and depolymerization and allows more extensive severing by cofilin. The polypeptide is WD repeat-containing protein 1 (Xenopus tropicalis (Western clawed frog)).